The following is a 190-amino-acid chain: Xanthine phosphoribosyltransferase 2 (190 aa).

Xanthine contacts are provided by L20 and N27. 129–133 (ANGCA) serves as a coordination point for 5-phospho-alpha-D-ribose 1-diphosphate. K157 provides a ligand contact to xanthine.

Belongs to the purine/pyrimidine phosphoribosyltransferase family. Xpt subfamily. Homodimer.

It is found in the cytoplasm. It carries out the reaction XMP + diphosphate = xanthine + 5-phospho-alpha-D-ribose 1-diphosphate. It functions in the pathway purine metabolism; XMP biosynthesis via salvage pathway; XMP from xanthine: step 1/1. In terms of biological role, converts the preformed base xanthine, a product of nucleic acid breakdown, to xanthosine 5'-monophosphate (XMP), so it can be reused for RNA or DNA synthesis. The sequence is that of Xanthine phosphoribosyltransferase 2 from Clostridium botulinum (strain ATCC 19397 / Type A).